Here is a 91-residue protein sequence, read N- to C-terminus: UPF0213 protein NMA2126 (91 aa).

Positions 4-83 (SNWSLYLILC…AAQKRKLWEQ (80 aa)) constitute a GIY-YIG domain.

It belongs to the UPF0213 family.

The polypeptide is UPF0213 protein NMA2126 (Neisseria meningitidis serogroup A / serotype 4A (strain DSM 15465 / Z2491)).